We begin with the raw amino-acid sequence, 381 residues long: Alkanesulfonate monooxygenase (381 aa).

Belongs to the SsuD family. In terms of assembly, homotetramer.

It catalyses the reaction an alkanesulfonate + FMNH2 + O2 = an aldehyde + FMN + sulfite + H2O + 2 H(+). Its function is as follows. Catalyzes the desulfonation of aliphatic sulfonates. This Escherichia fergusonii (strain ATCC 35469 / DSM 13698 / CCUG 18766 / IAM 14443 / JCM 21226 / LMG 7866 / NBRC 102419 / NCTC 12128 / CDC 0568-73) protein is Alkanesulfonate monooxygenase.